We begin with the raw amino-acid sequence, 372 residues long: Ketol-acid reductoisomerase (NADP(+)) (372 aa).

Positions 1-25 (MTETKTQTETETDEEEGTDTDTALD) are disordered. Residues 10-19 (TETDEEEGTD) are compositionally biased toward acidic residues. One can recognise a KARI N-terminal Rossmann domain in the interval 24–205 (LDTTIYYDDD…GCTRAGAIET (182 aa)). NADP(+)-binding positions include 49-52 (YGSQ), serine 75, serine 77, and 107-110 (DTVQ). Histidine 131 is an active-site residue. Glycine 157 contacts NADP(+). The 146-residue stretch at 206 to 351 (TFREETETDL…EPLRDLFAWS (146 aa)) folds into the KARI C-terminal knotted domain. Mg(2+)-binding residues include aspartate 214, glutamate 218, glutamate 250, and glutamate 254. Serine 275 contacts substrate. Residues 351–372 (SDNEETNDESDVVSEPEAAADD) are disordered. The segment covering 352 to 372 (DNEETNDESDVVSEPEAAADD) has biased composition (acidic residues).

Belongs to the ketol-acid reductoisomerase family. It depends on Mg(2+) as a cofactor.

The catalysed reaction is (2R)-2,3-dihydroxy-3-methylbutanoate + NADP(+) = (2S)-2-acetolactate + NADPH + H(+). The enzyme catalyses (2R,3R)-2,3-dihydroxy-3-methylpentanoate + NADP(+) = (S)-2-ethyl-2-hydroxy-3-oxobutanoate + NADPH + H(+). It functions in the pathway amino-acid biosynthesis; L-isoleucine biosynthesis; L-isoleucine from 2-oxobutanoate: step 2/4. It participates in amino-acid biosynthesis; L-valine biosynthesis; L-valine from pyruvate: step 2/4. In terms of biological role, involved in the biosynthesis of branched-chain amino acids (BCAA). Catalyzes an alkyl-migration followed by a ketol-acid reduction of (S)-2-acetolactate (S2AL) to yield (R)-2,3-dihydroxy-isovalerate. In the isomerase reaction, S2AL is rearranged via a Mg-dependent methyl migration to produce 3-hydroxy-3-methyl-2-ketobutyrate (HMKB). In the reductase reaction, this 2-ketoacid undergoes a metal-dependent reduction by NADPH to yield (R)-2,3-dihydroxy-isovalerate. The sequence is that of Ketol-acid reductoisomerase (NADP(+)) from Haloquadratum walsbyi (strain DSM 16790 / HBSQ001).